The chain runs to 374 residues: Pulmonary surfactant-associated protein D (374 aa).

An N-terminal signal peptide occupies residues 1–19 (MLPFLSMLVLLVQPLGNLG). S-nitrosocysteine is present on residues Cys-34 and Cys-39. Residues 38 to 222 (MCSPTENGLP…GIKGESGLPD (185 aa)) form a disordered region. The region spanning 45–221 (GLPGRDGRDG…RGIKGESGLP (177 aa)) is the Collagen-like domain. Basic and acidic residues predominate over residues 49–64 (RDGRDGREGPRGEKGD). A compositionally biased stretch (low complexity) spans 70 to 79 (PMGLSGLQGP). The N-linked (GlcNAc...) asparagine glycan is linked to Asn-89. Low complexity-rich tracts occupy residues 137–149 (KGEA…VGAP) and 169–200 (APGV…RGPP). The segment covering 203–215 (KGDRGVPGDRGIK) has biased composition (basic and acidic residues). The stretch at 222–253 (DSAALRQQMEALKGKLQRLEVAFSHYQKAALF) forms a coiled coil. The C-type lectin domain occupies 259–374 (VGDKIFRTAD…GEQRLVICEF (116 aa)). Disulfide bonds link Cys-280–Cys-372 and Cys-350–Cys-364.

Belongs to the SFTPD family. As to quaternary structure, oligomeric complex of 4 set of homotrimers. S-nitrosylation at Cys-34 and Cys-39 alters the quaternary structure which results in a pro-inflammatory chemoattractive signaling activity with macrophages.

Its subcellular location is the secreted. The protein resides in the extracellular space. It is found in the extracellular matrix. The protein localises to the surface film. In terms of biological role, contributes to the lung's defense against inhaled microorganisms, organic antigens and toxins. Interacts with compounds such as bacterial lipopolysaccharides, oligosaccharides and fatty acids and modulates leukocyte action in immune response. May participate in the extracellular reorganization or turnover of pulmonary surfactant. Binds strongly maltose residues and to a lesser extent other alpha-glucosyl moieties. The protein is Pulmonary surfactant-associated protein D (Sftpd) of Mus musculus (Mouse).